The chain runs to 330 residues: Cytoskeleton protein RodZ (330 aa).

Topologically, residues 1 to 111 are cytoplasmic; that stretch reads MNTEATQDHQ…LGKRRKKRDG (111 aa). Residues 19-71 form the HTH cro/C1-type domain; sequence LRHAREQLGLSQQAVAERLCLKVSTVRDIEDDKAPADLASTFLRGYIRSYARL. A DNA-binding region (H-T-H motif) is located at residues 30–49; sequence QQAVAERLCLKVSTVRDIED. The chain crosses the membrane as a helical; Signal-anchor for type II membrane protein span at residues 112-132; the sequence is WLMSFTWLVLFVVIGLSGAWW. At 133 to 330 the chain is on the periplasmic side; it reads WQDHKAQQEE…TLNAEQSPAQ (198 aa). Over residues 146–166 the composition is skewed to polar residues; the sequence is MADQSSAELNGGDANSQNVPL. The interval 146 to 237 is disordered; it reads MADQSSAELN…ASPLPTDQAN (92 aa). Low complexity-rich tracts occupy residues 176–202 and 216–233; these read TDSA…TPAD and TAGT…PLPT.

Belongs to the RodZ family.

The protein localises to the cell inner membrane. Cytoskeletal protein that is involved in cell-shape control through regulation of the length of the long axis. This Klebsiella pneumoniae (strain 342) protein is Cytoskeleton protein RodZ.